A 390-amino-acid polypeptide reads, in one-letter code: Transforming growth factor beta-1 proprotein (390 aa).

The N-terminal stretch at 1–29 (MPPSGLRLLPLLLPLLWLLMLTPGRPVAG) is a signal peptide. The interval 30–74 (LSTCKTIDMELVKRKGIEAIRGQILSKLRLASPPSQGDVPPGPLP) is straightjacket domain. The arm domain stretch occupies residues 75–271 (EAILALYNST…ATPLERAQHL (197 aa)). Residues Asn82, Asn136, and Asn176 are each glycosylated (N-linked (GlcNAc...) asparagine). Residues 226–252 (DSKDNTLQVDINGFSSGRRGDLATIHG) form a bowtie tail region. The short motif at 244–246 (RGD) is the Cell attachment site element. 4 disulfides stabilise this stretch: Cys285-Cys294, Cys293-Cys356, Cys322-Cys387, and Cys326-Cys389.

The protein belongs to the TGF-beta family. As to quaternary structure, homodimer; disulfide-linked. Interacts with the serine proteases, HTRA1 and HTRA3: the interaction with either inhibits TGFB1-mediated signaling and the HTRA protease activity is required for this inhibition. May interact with THSD4; this interaction may lead to sequestration by FBN1 microfibril assembly and attenuation of TGFB signaling. Interacts with CD109, DPT and ASPN. Interacts with EFEMP2. Interacts with TSKU; the interaction contributes to regulation of the hair cycle. Interacts with TGFBR3. In terms of assembly, homodimer; disulfide-linked. Interacts with transforming growth factor beta-1 (TGF-beta-1) chain; interaction is non-covalent and maintains TGF-beta-1 in a latent state; each latency-associated peptide (LAP) monomer interacts with TGF-beta-1 in the other monomer. Interacts with LTBP1; leading to regulation of TGF-beta-1 activation. Interacts with LRRC32/GARP; leading to regulation of TGF-beta-1 activation on the surface of activated regulatory T-cells (Tregs). Interacts with LRRC33/NRROS; leading to regulation of TGF-beta-1 activation in macrophages and microglia. Interacts (via cell attachment site) with integrins ITGAV and ITGB6 (ITGAV:ITGB6), leading to release of the active TGF-beta-1. Interacts with NREP; the interaction results in a decrease in TGFB1 autoinduction. Interacts with HSP90AB1; inhibits latent TGFB1 activation. Homodimer; disulfide-linked. Interacts with TGF-beta receptors (TGFBR1 and TGFBR2), leading to signal transduction. In terms of processing, transforming growth factor beta-1 proprotein: The precursor proprotein is cleaved in the Golgi apparatus by FURIN to form Transforming growth factor beta-1 (TGF-beta-1) and Latency-associated peptide (LAP) chains, which remain non-covalently linked, rendering TGF-beta-1 inactive. Post-translationally, N-glycosylated. Deglycosylation leads to activation of Transforming growth factor beta-1 (TGF-beta-1); mechanisms triggering deglycosylation-driven activation of TGF-beta-1 are however unclear.

Its subcellular location is the secreted. The protein resides in the extracellular space. It localises to the extracellular matrix. Transforming growth factor beta-1 proprotein: Precursor of the Latency-associated peptide (LAP) and Transforming growth factor beta-1 (TGF-beta-1) chains, which constitute the regulatory and active subunit of TGF-beta-1, respectively. Functionally, required to maintain the Transforming growth factor beta-1 (TGF-beta-1) chain in a latent state during storage in extracellular matrix. Associates non-covalently with TGF-beta-1 and regulates its activation via interaction with 'milieu molecules', such as LTBP1, LRRC32/GARP and LRRC33/NRROS, that control activation of TGF-beta-1. Interaction with LRRC33/NRROS regulates activation of TGF-beta-1 in macrophages and microglia. Interaction with LRRC32/GARP controls activation of TGF-beta-1 on the surface of activated regulatory T-cells (Tregs). Interaction with integrins (ITGAV:ITGB6 or ITGAV:ITGB8) results in distortion of the Latency-associated peptide chain and subsequent release of the active TGF-beta-1. In terms of biological role, multifunctional protein that regulates the growth and differentiation of various cell types and is involved in various processes, such as normal development, immune function, microglia function and responses to neurodegeneration. Activation into mature form follows different steps: following cleavage of the proprotein in the Golgi apparatus, Latency-associated peptide (LAP) and Transforming growth factor beta-1 (TGF-beta-1) chains remain non-covalently linked rendering TGF-beta-1 inactive during storage in extracellular matrix. At the same time, LAP chain interacts with 'milieu molecules', such as LTBP1, LRRC32/GARP and LRRC33/NRROS that control activation of TGF-beta-1 and maintain it in a latent state during storage in extracellular milieus. TGF-beta-1 is released from LAP by integrins (ITGAV:ITGB6 or ITGAV:ITGB8): integrin-binding to LAP stabilizes an alternative conformation of the LAP bowtie tail and results in distortion of the LAP chain and subsequent release of the active TGF-beta-1. Once activated following release of LAP, TGF-beta-1 acts by binding to TGF-beta receptors (TGFBR1 and TGFBR2), which transduce signal. While expressed by many cells types, TGF-beta-1 only has a very localized range of action within cell environment thanks to fine regulation of its activation by Latency-associated peptide chain (LAP) and 'milieu molecules'. Plays an important role in bone remodeling: acts as a potent stimulator of osteoblastic bone formation, causing chemotaxis, proliferation and differentiation in committed osteoblasts. Can promote either T-helper 17 cells (Th17) or regulatory T-cells (Treg) lineage differentiation in a concentration-dependent manner. At high concentrations, leads to FOXP3-mediated suppression of RORC and down-regulation of IL-17 expression, favoring Treg cell development. At low concentrations in concert with IL-6 and IL-21, leads to expression of the IL-17 and IL-23 receptors, favoring differentiation to Th17 cells. Stimulates sustained production of collagen through the activation of CREB3L1 by regulated intramembrane proteolysis (RIP). Mediates SMAD2/3 activation by inducing its phosphorylation and subsequent translocation to the nucleus. Positively regulates odontoblastic differentiation in dental papilla cells, via promotion of IPO7-mediated translocation of phosphorylated SMAD2 to the nucleus and subsequent transcription of target genes. Can induce epithelial-to-mesenchymal transition (EMT) and cell migration in various cell types. The sequence is that of Transforming growth factor beta-1 proprotein (TGFB1) from Ovis aries (Sheep).